We begin with the raw amino-acid sequence, 285 residues long: Acetylglutamate kinase (285 aa).

Substrate contacts are provided by residues 64–65, arginine 86, and asparagine 181; that span reads GG.

The protein belongs to the acetylglutamate kinase family. ArgB subfamily.

The protein resides in the cytoplasm. It catalyses the reaction N-acetyl-L-glutamate + ATP = N-acetyl-L-glutamyl 5-phosphate + ADP. Its pathway is amino-acid biosynthesis; L-arginine biosynthesis; N(2)-acetyl-L-ornithine from L-glutamate: step 2/4. Its function is as follows. Catalyzes the ATP-dependent phosphorylation of N-acetyl-L-glutamate. In Clostridium beijerinckii (strain ATCC 51743 / NCIMB 8052) (Clostridium acetobutylicum), this protein is Acetylglutamate kinase.